The primary structure comprises 883 residues: Phosphoenolpyruvate carboxylase (883 aa).

Residues histidine 138 and lysine 546 contribute to the active site.

The protein belongs to the PEPCase type 1 family. It depends on Mg(2+) as a cofactor.

It catalyses the reaction oxaloacetate + phosphate = phosphoenolpyruvate + hydrogencarbonate. In terms of biological role, forms oxaloacetate, a four-carbon dicarboxylic acid source for the tricarboxylic acid cycle. The chain is Phosphoenolpyruvate carboxylase from Salmonella schwarzengrund (strain CVM19633).